We begin with the raw amino-acid sequence, 85 residues long: YcgL domain-containing protein PC1_1941 (85 aa).

In terms of domain architecture, YcgL spans 1–85 (MFCVIYRSAK…PVENLLNTPV (85 aa)).

The polypeptide is YcgL domain-containing protein PC1_1941 (Pectobacterium carotovorum subsp. carotovorum (strain PC1)).